The primary structure comprises 1886 residues: MARASLIQPGLWALLLLQAVGPAVAAKLNIPKVLLPFTRATRVNFTLEASEGCYRWSSTRPEVASIEPLGSSEQQCSQKAVVQARLTQPARLTSIIFAEDITTGQVLRCDAIVDLIHGIQIVSTTRELYLEDSPLELKIQALDSEGNTFSTLAGLVFDWTIVKDTEANGFSDSHNALRILTFLESTYIPPSYISEMEKAAKQGDTILVSGMKTGSSKLKARIQEAVYKNVRPAEVRLLILENILLNPAYDVYLLVGTSIHYKVQKIRQGKITELSMPSDQYELQLQNSIPDPQGDPARPVAVLTQDTSRVTAMQMGQSNLVLGHRSIRMQGASRLPNSTIYVVEAGYLGFTVHPGDRWVLETGHLYAVTIEVFDRSSNKVYPSDNIRIEAVFPAEFFEVLSSSQNGSYHHVRAIQSGQTTISASLTSVVDQDGGVHVLQVPVWNQQEVDIHIPITLYPSILTFPWQPKTGAYQYTIKAHGGSGNFTWSSSSYMVATVTVKGVMTTGGDTGLSVIRAHDVQNPLHFGEMKVYVIEPSSMEFAPCQVEARVGHTLELPLTISGLMPGGSSEVVTLSDCSHFDLVVEVENQGVFQPLPGRLPPGPEHCSGVKVRADAQGSTTLLVSYTHGHVHLGAKITLAAYLPLKAVDPSSVAVVTLGSSKEMLFEGGPRPWVLEPSKFFRNVTSEDTGSISLSLLGPPASRNYQQHRVLVTCQALGEQVIALSVGNRPSLSNPFPAVEPTVVKSVCAPPSRLTLMPVYALPQLDLSCPLLQQNKQVVPVSSHRNPLLDLGAYDQQGRRFDNFSSLSIQWESFRPLLASIEVDQPMQLVSQDDGNGQKKLHGLQTVSVHEASGTTAISATATGYQQSHLSAAGVKQLRDPLVPVSASIELILVEDVRVSPEEVTIYNHPGVQVELHITEGSGYFFLNTSTQDIINVAYQDTRGVAMVHPLFPGSSTVMVHDLCLTFPAPAKATIHVSDIQELYVRVVDKVEIGKAVKAYVRVLDFYKKPFLAKYFTFMDLKLRAASQIITLVTLDEALDNYTATFLVHGVAIGQTSLSASVTDKSGQRVSSTAQQIEVFPPFRLIPRKVTLIIGAMIQITSEGGPQPQSNILFSINNESVAAVSSAGLVRGLMVGNGSVLGVVQAVDAETGKVIIVSQDHVEVEVLQLQAVRIRAPITRMRTGTQMPVYVTGITSNQSPFSFGNAVPGLTFHWSVTKRDVLDLRGRHHEVSIRLSPQYNFAMNVHGRVKGRTGLRVVVKALDPTAGQLHGLGKELSDEIQIQVFEKLRLLNPEVEAEQILMSPNSFIKLQTNRDGAAILSYRVLDGPEKAPIVHIDEKGFLVSGSGIGVSTLEVIAQEPFGTNQTVLVAVKVSPISYLRISMSPVLHTQHKEVLTALPLGMTVTFTVHFHDSSGDIFHAHNSDLNFATNRDDFVQIGKGATNNTCIIRTVSVGLTLLHVWDVEHLGLSDFVPLPVLQAITPELSGAVVVGDILCLASVLISLGGVSGTWSSSAGNVLYVDPKTGVAIARDAGPVTVYYEIAGHLKTFKEIVVVTPQKIVARRLHATQTSIQEATASKVTVSVGDRSSNLLGECSSAQREAIEALHPESLISCQLQFKQDVFDFPARDIFSVEPGFDTALGQYLCSVTMHRLTDKQLKHLNMKKTSLAVTASMPSSRTSVEKVGAEVPFSPGLYANQAEILLSNHYPSSEVKIFGAVEILENLEVRSGSPAVLASVKEKSFGLPSFITYTVGVLDPTAGSQGPLSTALTFSSPATNQAITIPVTVAFVLDRRGPGPYGASLLSHFLDSYQVMFFTFFALLAGTAVTIIAYHTVCAPRELASPLALTPHASPQHSPHYLASSPTAFNTLPSDRKASPPSGLWSPAYASH.

Positions 1–25 (MARASLIQPGLWALLLLQAVGPAVA) are cleaved as a signal peptide. Residues 26 to 1805 (AKLNIPKVLL…GASLLSHFLD (1780 aa)) are Perinuclear space-facing. N337, N484, N681, and N1039 each carry an N-linked (GlcNAc...) asparagine glycan. Positions 1078-1151 (FPPFRLIPRK…VQAVDAETGK (74 aa)) constitute a BIG2 domain. The chain crosses the membrane as a helical span at residues 1806–1828 (SYQVMFFTFFALLAGTAVTIIAY). Topologically, residues 1829-1886 (HTVCAPRELASPLALTPHASPQHSPHYLASSPTAFNTLPSDRKASPPSGLWSPAYASH) are cytoplasmic. The residue at position 1839 (S1839) is a Phosphoserine. Phosphothreonine is present on T1844. The interval 1866 to 1886 (LPSDRKASPPSGLWSPAYASH) is disordered. Phosphoserine is present on residues S1873, S1876, S1880, and S1885.

Belongs to the NUP210 family. Forms dimers and possibly higher-order oligomers. In terms of processing, N-glycosylated, but not all potential glycosylation sites may be used. Contains high-mannose type oligosaccharides. Post-translationally, phosphorylated at Ser-1880 in mitosis specifically; not phosphorylated in interphase.

It localises to the nucleus. The protein localises to the nuclear pore complex. It is found in the nucleus membrane. Its subcellular location is the endoplasmic reticulum membrane. Its function is as follows. Nucleoporin essential for nuclear pore assembly and fusion, nuclear pore spacing, as well as structural integrity. This chain is Nuclear pore membrane glycoprotein 210 (Nup210), found in Rattus norvegicus (Rat).